The sequence spans 278 residues: Non-haem bromoperoxidase BPO-A2 (278 aa).

The AB hydrolase-1 domain maps to 26–264 (PVVLIHGFPL…GAPHGLLWTH (239 aa)). Residues S99, D229, and H258 contribute to the active site.

It belongs to the AB hydrolase superfamily. Bacterial non-heme haloperoxidase / perhydrolase family. As to quaternary structure, homotrimer.

In terms of biological role, may be a chlorinating enzyme involved in 7-chlorotetracycline biosynthesis. This chain is Non-haem bromoperoxidase BPO-A2 (bpoA2), found in Kitasatospora aureofaciens (Streptomyces aureofaciens).